Consider the following 962-residue polypeptide: Translation initiation factor IF-2 (962 aa).

The segment at 99–366 (VKAAQTQAAP…KKGKKLKLEP (268 aa)) is disordered. Basic and acidic residues predominate over residues 117–141 (DAAKARAEAAARAEARAKAEAEAAK). Residues 145-155 (AKAGNKAKPAA) show a composition bias toward low complexity. Positions 173–216 (KPAEESKAEKAQADKMPSEKPAEPKEKAAKPKHERNGKGKDAKK) are enriched in basic and acidic residues. Positions 219-234 (KPAAPAVPQPVVSAEE) are enriched in low complexity. The segment covering 235–269 (QAQRDEEARRAAALRAHQEALLKEKQERQARREAM) has biased composition (basic and acidic residues). Low complexity predominate over residues 270–283 (KQQAEQQAKAAQEA). Composition is skewed to basic and acidic residues over residues 314–327 (AKKEDRRNRDDEGQ) and 338–354 (GGRDRNNARNGDDERVR). The tr-type G domain maps to 462 to 631 (PRPPVVTVMG…LLEAEVLELT (170 aa)). Residues 471 to 478 (GHVDHGKT) are G1. 471 to 478 (GHVDHGKT) contacts GTP. The tract at residues 496 to 500 (GITQH) is G2. Positions 517-520 (DTPG) are G3. Residues 517–521 (DTPGH) and 571–574 (NKID) contribute to the GTP site. The segment at 571-574 (NKID) is G4. A G5 region spans residues 607–609 (SAK).

This sequence belongs to the TRAFAC class translation factor GTPase superfamily. Classic translation factor GTPase family. IF-2 subfamily.

It localises to the cytoplasm. In terms of biological role, one of the essential components for the initiation of protein synthesis. Protects formylmethionyl-tRNA from spontaneous hydrolysis and promotes its binding to the 30S ribosomal subunits. Also involved in the hydrolysis of GTP during the formation of the 70S ribosomal complex. This Neisseria meningitidis serogroup B (strain ATCC BAA-335 / MC58) protein is Translation initiation factor IF-2.